Here is a 125-residue protein sequence, read N- to C-terminus: Short coiled-coil protein (125 aa).

Residues 1-31 form a disordered region; the sequence is MSKMDGLSTGEEEDSTFTSISLEDDTDHSLK. The stretch at 43-101 forms a coiled coil; that stretch reads KMMNADMDAVDAENQVELEEKTRLINQVLELQHTLEDLSARVDAVKEENLKLKSENQVL.

Belongs to the SCOC family. Homodimer. Interacts with ARL1, ARL2 and ARL3. Directly interacts with FEZ1 and UVRAG. The interaction with UVRAG is reduced by amino acid starvation, but the complex is stabilized in the presence of FEZ1. Interacts with NRBF2.

The protein localises to the golgi apparatus membrane. The protein resides in the golgi apparatus. It localises to the trans-Golgi network. Its subcellular location is the cytoplasm. It is found in the cytosol. Positive regulator of amino acid starvation-induced autophagy. The polypeptide is Short coiled-coil protein (Scoc) (Mus musculus (Mouse)).